Reading from the N-terminus, the 243-residue chain is Probable 2-phosphosulfolactate phosphatase (243 aa).

The protein belongs to the ComB family. Mg(2+) is required as a cofactor.

It carries out the reaction (2R)-O-phospho-3-sulfolactate + H2O = (2R)-3-sulfolactate + phosphate. This is Probable 2-phosphosulfolactate phosphatase from Prochlorococcus marinus (strain MIT 9303).